The following is a 490-amino-acid chain: Subtilisin-like protease 8 (490 aa).

Residues 1–26 (MKGLLSLSVLPVLAYASPMIVDSIHQ) form the signal peptide. A propeptide spanning residues 27–134 (NAAPILSSTN…YIERDSEVHT (108 aa)) is cleaved from the precursor. The Inhibitor I9 domain maps to 43–134 (SYIVVFKKGV…YIERDSEVHT (92 aa)). The Peptidase S8 domain maps to 144–450 (PWGLARISHR…GGSDDYKKII (307 aa)). Catalysis depends on charge relay system residues aspartate 180 and histidine 212. Asparagine 282 is a glycosylation site (N-linked (GlcNAc...) asparagine). Serine 378 serves as the catalytic Charge relay system. N-linked (GlcNAc...) asparagine glycosylation occurs at asparagine 456.

Belongs to the peptidase S8 family.

It localises to the secreted. In terms of biological role, secreted subtilisin-like serine protease with keratinolytic activity that contributes to pathogenicity. In Arthroderma benhamiae (strain ATCC MYA-4681 / CBS 112371) (Trichophyton mentagrophytes), this protein is Subtilisin-like protease 8 (SUB8).